Reading from the N-terminus, the 420-residue chain is Mannose-1-phosphate guanylyltransferase regulatory subunit alpha (420 aa).

The substrate-binding domain stretch occupies residues 2–251; it reads LKAVILIGGP…DGIWSQIKSA (250 aa). GDP-alpha-D-mannose-binding residues include Glu85 and Gln247. Residues 273–420 are hexapeptide repeat domain; that stretch reads LAKHTPGGPW…SRSFTNQIIL (148 aa). Residues 356-384 are C-loop; the sequence is TPSDPNPNDPRARMDSESLFKDGKLLPAI.

This sequence belongs to the transferase hexapeptide repeat family. As to quaternary structure, component of the GMPPA-GMPPB mannose-1-phosphate guanylyltransferase complex composed of 4 GMPPA subunits and 8 GMPPB subunits; the complex is organized into three layers, a central layer made up of 2 GMPPA dimers sandwiched between two layers each made up of 2 GMPPB dimers. As to expression, expressed in fibroblasts (at protein level).

Its subcellular location is the cytoplasm. Functionally, regulatory subunit of the GMPPA-GMPPB mannose-1-phosphate guanylyltransferase complex; reduces the catalytic activity of GMPPB when part of the complex. Mediates allosteric feedback inhibition of GMPPB catalytic activity upon binding GDP-alpha-D-mannose. Together with GMPPB regulates GDP-alpha-D-mannose levels. The sequence is that of Mannose-1-phosphate guanylyltransferase regulatory subunit alpha from Homo sapiens (Human).